The chain runs to 146 residues: Hemoglobin subunit beta (146 aa).

In terms of domain architecture, Globin spans histidine 2 to histidine 146. Positions 63 and 92 each coordinate heme b.

This sequence belongs to the globin family. In terms of assembly, heterotetramer of two alpha chains and two beta chains. Red blood cells.

Functionally, involved in oxygen transport from the lung to the various peripheral tissues. In Microcephalophis gracilis (Graceful small-headed sea snake), this protein is Hemoglobin subunit beta (HBB).